We begin with the raw amino-acid sequence, 29 residues long: Dermaseptin-9TR (29 aa).

Expressed by the skin glands.

The protein resides in the secreted. In terms of biological role, has antimicrobial activity. This is Dermaseptin-9TR from Phyllomedusa trinitatis (Trinidad leaf frog).